The following is a 170-amino-acid chain: Peptide deformylase (170 aa).

The Fe cation site is built by cysteine 94 and histidine 136. Glutamate 137 is an active-site residue. Histidine 140 contacts Fe cation.

The protein belongs to the polypeptide deformylase family. The cofactor is Fe(2+).

It carries out the reaction N-terminal N-formyl-L-methionyl-[peptide] + H2O = N-terminal L-methionyl-[peptide] + formate. In terms of biological role, removes the formyl group from the N-terminal Met of newly synthesized proteins. Requires at least a dipeptide for an efficient rate of reaction. N-terminal L-methionine is a prerequisite for activity but the enzyme has broad specificity at other positions. The sequence is that of Peptide deformylase from Xylella fastidiosa (strain 9a5c).